We begin with the raw amino-acid sequence, 321 residues long: Glucokinase (321 aa).

Residue 8 to 13 (GDVGGT) coordinates ATP.

Belongs to the bacterial glucokinase family.

Its subcellular location is the cytoplasm. The catalysed reaction is D-glucose + ATP = D-glucose 6-phosphate + ADP + H(+). This Klebsiella pneumoniae (strain 342) protein is Glucokinase.